The chain runs to 404 residues: Propionate kinase PduW (404 aa).

It belongs to the acetokinase family. PduW subfamily.

The protein resides in the cytoplasm. It carries out the reaction propanoate + ATP = propanoyl phosphate + ADP. It functions in the pathway polyol metabolism; 1,2-propanediol degradation. The protein operates within organic acid metabolism; propanoate degradation. Its function is as follows. Works with phosphate acetyltransferase (pta) to capture exogenous propionate and regenerate propionyl-CoA during degradation of propionate and 1,2-propanediol (1,2-PD). Ectopic expression partially complements a cobB deletion allowing some growth on propionate. Restores growth to an eutQ deletion on ethanolamine and tetrathionate under anoxic conditions. This is Propionate kinase PduW from Salmonella typhimurium (strain LT2 / SGSC1412 / ATCC 700720).